Consider the following 508-residue polypeptide: 2,3-bisphosphoglycerate-independent phosphoglycerate mutase (508 aa).

Residues aspartate 9 and serine 59 each coordinate Mn(2+). The active-site Phosphoserine intermediate is serine 59. Residues histidine 120, 149–150 (RD), arginine 181, arginine 187, 254–257 (RADR), and lysine 331 contribute to the substrate site. Aspartate 398, histidine 402, aspartate 439, histidine 440, and histidine 456 together coordinate Mn(2+).

It belongs to the BPG-independent phosphoglycerate mutase family. Mn(2+) serves as cofactor.

The catalysed reaction is (2R)-2-phosphoglycerate = (2R)-3-phosphoglycerate. It participates in carbohydrate degradation; glycolysis; pyruvate from D-glyceraldehyde 3-phosphate: step 3/5. Its function is as follows. Catalyzes the interconversion of 2-phosphoglycerate and 3-phosphoglycerate. This is 2,3-bisphosphoglycerate-independent phosphoglycerate mutase from Halobacterium salinarum (strain ATCC 700922 / JCM 11081 / NRC-1) (Halobacterium halobium).